Consider the following 155-residue polypeptide: Nascent polypeptide-associated complex subunit beta (155 aa).

Disordered stretches follow at residues 1 to 35 (MDQAKLARMQQSVRIGGKGTPRRKVKKVHKSSGAD) and 116 to 155 (LAESYQNMQKNQAGADGKKDDEEDDIPDLVEGENFESNVE). Residues 20–30 (TPRRKVKKVHK) are compositionally biased toward basic residues. One can recognise an NAC-A/B domain in the interval 33 to 98 (GADDKKLQAT…GEEKELTELV (66 aa)). Residues 136 to 155 (DEEDDIPDLVEGENFESNVE) show a composition bias toward acidic residues.

This sequence belongs to the NAC-beta family. Part of the nascent polypeptide-associated complex (NAC), consisting of egd2 and egd1. NAC associates with ribosomes via egd1.

The protein resides in the cytoplasm. It is found in the nucleus. Component of the nascent polypeptide-associated complex (NAC), a dynamic component of the ribosomal exit tunnel, protecting the emerging polypeptides from interaction with other cytoplasmic proteins to ensure appropriate nascent protein targeting. The NAC complex also promotes mitochondrial protein import by enhancing productive ribosome interactions with the outer mitochondrial membrane and blocks the inappropriate interaction of ribosomes translating non-secretory nascent polypeptides with translocation sites in the membrane of the endoplasmic reticulum. EGD1 may act as a transcription factor that exert a negative effect on the expression of several genes that are transcribed by RNA polymerase II. This Aspergillus niger (strain ATCC MYA-4892 / CBS 513.88 / FGSC A1513) protein is Nascent polypeptide-associated complex subunit beta (egd1).